The sequence spans 802 residues: Oligophrenin-1 (802 aa).

Residues 265–368 enclose the PH domain; it reads QPTIEGYLYT…WMEAMDGKEP (104 aa). Residues 380–564 enclose the Rho-GAP domain; that stretch reads MELNEVGFKF…ILIEHFGKIY (185 aa). Disordered stretches follow at residues 606-665 and 681-802; these read SLDE…SEPC and GTKA…GDES. Residues 617-627 are compositionally biased toward polar residues; sequence QTPNGTITSNL. Positions 716-732 are enriched in basic and acidic residues; that stretch reads HHKEGDTDGFSKVRPPG.

Interacts with HOMER1. Interacts with AMPA receptor complexes. Interacts with SH3GL2 (endophilin-A1). Interacts (via C-terminus) with NR1D1.

The protein localises to the postsynapse. It is found in the presynapse. Its subcellular location is the cell projection. It localises to the axon. The protein resides in the dendritic spine. The protein localises to the dendrite. It is found in the cytoplasm. Functionally, stimulates GTP hydrolysis of members of the Rho family. Its action on RHOA activity and signaling is implicated in growth and stabilization of dendritic spines, and therefore in synaptic function. Critical for the stabilization of AMPA receptors at postsynaptic sites. Critical for the regulation of synaptic vesicle endocytosis at presynaptic terminals. Required for the localization of NR1D1 to dendrites, can suppress its repressor activity and protect it from proteasomal degradation. This is Oligophrenin-1 (Ophn1) from Mus musculus (Mouse).